Consider the following 128-residue polypeptide: Flagellar assembly factor FliW (128 aa).

Belongs to the FliW family. Interacts with translational regulator CsrA and flagellin(s).

It localises to the cytoplasm. In terms of biological role, acts as an anti-CsrA protein, binds CsrA and prevents it from repressing translation of its target genes, one of which is flagellin. Binds to flagellin and participates in the assembly of the flagellum. The polypeptide is Flagellar assembly factor FliW (Campylobacter fetus subsp. fetus (strain 82-40)).